The primary structure comprises 353 residues: WD repeat-containing protein 55 (353 aa).

7 WD repeats span residues 4–43 (DLGA…SLVR), 49–88 (AHKE…QVAH), 92–130 (AHED…CSHE), 133–172 (AHED…VQSQ), 175–214 (FSED…DCSD), 218–257 (DLAP…IIQP), and 260–299 (SHDY…EGSN). Residues 300-353 (VNSGNASGAAEDSDSDNDGMDLDNDPSKSSKGSKRKTKSKANTLNATNNFFADL) are disordered. Over residues 310-323 (EDSDSDNDGMDLDN) the composition is skewed to acidic residues. Low complexity predominate over residues 339 to 353 (KANTLNATNNFFADL).

It belongs to the WD repeat WDR55 family. In terms of assembly, interacts with DDB1A. Highly expressed in roots. Expressed in cotyledons, leaves, buds and flowers.

It localises to the nucleus. The protein localises to the cytoplasm. Required for male and female gametogenesis, seed development, and embryo and endosperm development at early stages. Involved in the establishment of bilateral symmetry in the transition from the globular to the heart embryo stage. May act in the frame of a CRL4 complex. Required for proper vegetative growth and organization of the adult plant body. May play a role in hormonal control of plant development. The protein is WD repeat-containing protein 55 of Arabidopsis thaliana (Mouse-ear cress).